The chain runs to 273 residues: Alkaline ceramidase 1 (273 aa).

Residues 1 to 36 (MHVPGTRAKMSSIFAYQSSEVDWCESNFQHSELVAE) lie on the Lumenal side of the membrane. Residues aspartate 22, tryptophan 23, glutamate 25, asparagine 27, and glutamate 36 each coordinate Ca(2+). Residues 37–57 (FYNTFSNVFFLIFGPLMMFLM) form a helical membrane-spanning segment. At 58–72 (HPYAQKRTRCFYGVS) the chain is on the cytoplasmic side. Helical transmembrane passes span 73-93 (VLFM…SFLG) and 94-114 (QLLD…VWLP). Histidine 86 is a binding site for Zn(2+). The Cytoplasmic segment spans residues 115–126 (RCYFPKFVKGNR). The chain crosses the membrane as a helical span at residues 127 to 147 (FYFSCLVTITTIISTFLTFVK). Topologically, residues 148-149 (PT) are lumenal. Residues 150-167 (VNAYALNSIAIHILYIVR) traverse the membrane as a helical segment. Topologically, residues 168 to 177 (TEYKKIRDDD) are cytoplasmic. Residues 178–198 (LRHLIAVSVVLWAAALTSWIS) form a helical membrane-spanning segment. The Lumenal segment spans residues 199-215 (DRVLCSFWQRIHFYYLH). Zn(2+) is bound by residues histidine 215 and histidine 219. A helical membrane pass occupies residues 216–236 (SIWHVLISITFPYGIVTMALV). The Cytoplasmic portion of the chain corresponds to 237-273 (DAKYEMPDKTLKVHYWPRDSWVIGLPYVEIQENDKNC).

Belongs to the alkaline ceramidase family. Zn(2+) is required as a cofactor. In terms of tissue distribution, highly expressed in skin. Weakly or not expressed in other tissues. Expressed by granular layer of interfollicular epidermis, sebaceous glands and infundibulum.

The protein localises to the endoplasmic reticulum membrane. The catalysed reaction is an N-acylsphing-4-enine + H2O = sphing-4-enine + a fatty acid. It carries out the reaction N-tetracosanoyl-sphing-4-enine + H2O = tetracosanoate + sphing-4-enine. The enzyme catalyses an N-acylsphinganine + H2O = sphinganine + a fatty acid. It catalyses the reaction N-(9Z-octadecenoyl)-sphing-4-enine + H2O = sphing-4-enine + (9Z)-octadecenoate. The catalysed reaction is N-(15Z-tetracosenoyl)-sphing-4-enine + H2O = (15Z)-tetracosenoate + sphing-4-enine. It participates in lipid metabolism; sphingolipid metabolism. With respect to regulation, inhibited by sphingosine. Inhibited by Mn(2+), Zn(2+), and Cu(2+) in a dose-dependent manner. Slightly activated by Ca(2+) in a dose-dependent manner. Its function is as follows. Endoplasmic reticulum ceramidase that catalyzes the hydrolysis of ceramides into sphingosine and free fatty acids at alkaline pH. Ceramides, sphingosine, and its phosphorylated form sphingosine-1-phosphate are bioactive lipids that mediate cellular signaling pathways regulating several biological processes including cell proliferation, apoptosis and differentiation. Exhibits a strong substrate specificity towards the natural stereoisomer of ceramides with D-erythro-sphingosine as a backbone and has a higher activity towards very long-chain unsaturated fatty acids like the C24:1-ceramide. May also hydrolyze dihydroceramides to produce dihydrosphingosine. ACER1 is a skin-specific ceramidase that regulates the levels of ceramides, sphingosine and sphingosine-1-phosphate in the epidermis, mediates the calcium-induced differentiation of epidermal keratinocytes and more generally plays an important role in skin homeostasis. The sequence is that of Alkaline ceramidase 1 from Mus musculus (Mouse).